Consider the following 197-residue polypeptide: Fucoxanthin-chlorophyll a-c binding protein E, chloroplastic (197 aa).

The N-terminal 31 residues, 1 to 31 (MKFVVFASLLASAARFAPAQQSARTSVATNM), are a transit peptide targeting the chloroplast. The next 3 helical transmembrane spans lie at 73-94 (ISMLAVAGYLVQENGIRLPGDI), 114-134 (ISGAGIAQIVAFIGFLELAVM), and 174-196 (GRAAQMGILALMVHEQLGVSLIP).

The protein belongs to the fucoxanthin chlorophyll protein family. In terms of assembly, the LHC complex of chromophytic algae is composed of fucoxanthin, chlorophyll A and C bound non-covalently by fucoxanthin chlorophyll proteins (FCPs). The ratio of the pigments in LHC; fucoxanthin: chlorophyll C: chlorophyll A; (0.6-1): (0.1-0.3): (1).

It is found in the plastid. The protein localises to the chloroplast thylakoid membrane. The light-harvesting complex (LHC) functions as a light receptor, it captures and delivers excitation energy to photosystems with which it is closely associated. Energy is transferred from the carotenoid and chlorophyll C (or B) to chlorophyll A and the photosynthetic reaction centers where it is used to synthesize ATP and reducing power. This Phaeodactylum tricornutum (Diatom) protein is Fucoxanthin-chlorophyll a-c binding protein E, chloroplastic (FCPE).